Consider the following 449-residue polypeptide: Xaa-Pro dipeptidase (449 aa).

The Mn(2+) site is built by D246, D257, H345, E390, and E429.

This sequence belongs to the peptidase M24B family. Bacterial-type prolidase subfamily. Requires Mn(2+) as cofactor.

The enzyme catalyses Xaa-L-Pro dipeptide + H2O = an L-alpha-amino acid + L-proline. In terms of biological role, splits dipeptides with a prolyl residue in the C-terminal position. This chain is Xaa-Pro dipeptidase, found in Yersinia enterocolitica serotype O:8 / biotype 1B (strain NCTC 13174 / 8081).